A 239-amino-acid polypeptide reads, in one-letter code: Probable transcriptional regulatory protein BLi00754/BL02339 (239 aa).

This sequence belongs to the TACO1 family. YeeN subfamily.

It localises to the cytoplasm. The protein is Probable transcriptional regulatory protein BLi00754/BL02339 of Bacillus licheniformis (strain ATCC 14580 / DSM 13 / JCM 2505 / CCUG 7422 / NBRC 12200 / NCIMB 9375 / NCTC 10341 / NRRL NRS-1264 / Gibson 46).